The chain runs to 313 residues: UDP-glucose 4-epimerase (313 aa).

NAD(+) contacts are provided by residues 11 to 12 (FI), 31 to 36 (DDLSSG), 56 to 57 (DI), and 77 to 81 (LAAQI). Residues S121 and Y146 each contribute to the substrate site. Residues Y146 and K150 each contribute to the NAD(+) site. Y146 (proton acceptor) is an active-site residue. Substrate is bound by residues N175, 189–190 (VV), 204–206 (KIF), R213, and 271–274 (RLGD).

This sequence belongs to the NAD(P)-dependent epimerase/dehydratase family. In terms of assembly, homodimer. It depends on NAD(+) as a cofactor.

It catalyses the reaction UDP-alpha-D-glucose = UDP-alpha-D-galactose. Its pathway is carbohydrate metabolism; galactose metabolism. In terms of biological role, involved in the metabolism of galactose. Catalyzes the conversion of UDP-galactose (UDP-Gal) to UDP-glucose (UDP-Glc) through a mechanism involving the transient reduction of NAD. In Mycolicibacterium smegmatis (strain ATCC 700084 / mc(2)155) (Mycobacterium smegmatis), this protein is UDP-glucose 4-epimerase.